Reading from the N-terminus, the 345-residue chain is Phosphoribosylformylglycinamidine cyclo-ligase (345 aa).

The protein belongs to the AIR synthase family.

It is found in the cytoplasm. The enzyme catalyses 2-formamido-N(1)-(5-O-phospho-beta-D-ribosyl)acetamidine + ATP = 5-amino-1-(5-phospho-beta-D-ribosyl)imidazole + ADP + phosphate + H(+). It functions in the pathway purine metabolism; IMP biosynthesis via de novo pathway; 5-amino-1-(5-phospho-D-ribosyl)imidazole from N(2)-formyl-N(1)-(5-phospho-D-ribosyl)glycinamide: step 2/2. The polypeptide is Phosphoribosylformylglycinamidine cyclo-ligase (Myxococcus xanthus (strain DK1622)).